The following is a 1506-amino-acid chain: DDB1- and CUL4-associated factor 1 (1506 aa).

The interval 141-499 is protein kinase-like; sequence QPLRTYSTGL…STLEILNLED (359 aa). Phosphoserine occurs at positions 202 and 254. Residues 241–275 are disordered; it reads RLDSSHKTSSRVNSATKPEEGGLKKNKSAKHGDRE. One can recognise a Chromo domain in the interval 561–592; the sequence is SYTHEQIVEMMEFLIEYGPAQLYWEPAEVFLK. Lys-700 carries the post-translational modification N6-acetyllysine. A Phosphoserine modification is found at Ser-827. Positions 845–877 constitute a LisH domain; that stretch reads PEKELLLLIRNHLISKGLGETATVLTREADLPM. Thr-887 bears the Phosphothreonine mark. Phosphoserine occurs at positions 894 and 897. Disordered regions lie at residues 916–946 and 977–999; these read ATVGASAPSAPPAHPPPRPPQGSLPLPGPSY and KSDHGAYSQSPAIKKQLDRHLPS. The span at 924-943 shows a compositional bias: pro residues; sequence SAPPAHPPPRPPQGSLPLPG. Ser-978 and Ser-999 each carry phosphoserine. WD repeat units follow at residues 1090 to 1129, 1132 to 1173, 1175 to 1212, 1214 to 1246, and 1247 to 1289; these read EDESGFTCCAFSARERFLMLGTCTGQLKLYNVFSGQEEAS, CHNS…DMKH, FTEDHYVEFSKHSQDRVIGTKGDIAHIYDIQTGNKLLT, FNPDLANNYKRNCATFNPTDDLVLNDGVLWDVR, and SAQA…LLHT. The tract at residues 1090–1289 is WD repeat-like region; it reads EDESGFTCCA…DLRTFHLLHT (200 aa). 2 consecutive short sequence motifs (DWD box) follow at residues 1241-1248 and 1277-1284; these read VLWDVRSA and EIWDLRTF. Ser-1327 is modified (phosphoserine). The interval 1392 to 1506 is disordered; the sequence is RLAEDEDEEE…EDDIILSLNE (115 aa). Composition is skewed to acidic residues over residues 1395–1482 and 1489–1500; these read EDED…EEVE and DSSDNSDLEDDI. The segment at 1417–1506 is interaction with NF2; it reads DDDTDDLDEL…EDDIILSLNE (90 aa).

Belongs to the VPRBP/DCAF1 family. In terms of assembly, component of the DCX (DDB1-CUL4-X-box) E3 ubiquitin-protein ligase complex, named CUL4A-RBX1-DDB1-DCAF1/VPRBP complex. Interacts with DDB1; the interaction is direct. Also forms a ternary complex with DDA1 and DDB1. Interacts with NF2 (via FERM domain). Component of the EDVP complex, a E3 ligase complex containing DYRK2, EDD/UBR5, DDB1 and DCAF1. Interacts with DYRK2; the interaction is direct. Interacts with RAG1; the interaction is direct. Interacts with LLGL1 and LLGL2. Interacts with histone H3. Interacts with ESR1 and LATS1; probably recruited by LATS1 to promote ESR1 ubiquitination and ubiquitin-mediated proteasomal degradation. Directly interacts with TET1, TET2 and TET3 (via C-terminus). Interacts with CEP78; promoting DCAF1 localization to centrosomes. In terms of tissue distribution, widely expressed. Expressed in oocytes and zygotes (at protein level).

The protein resides in the cytoplasm. It is found in the nucleus. It localises to the cytoskeleton. Its subcellular location is the microtubule organizing center. The protein localises to the centrosome. The enzyme catalyses L-seryl-[protein] + ATP = O-phospho-L-seryl-[protein] + ADP + H(+). It carries out the reaction L-threonyl-[protein] + ATP = O-phospho-L-threonyl-[protein] + ADP + H(+). It functions in the pathway protein modification; protein ubiquitination. Functionally, acts both as a substrate recognition component of E3 ubiquitin-protein ligase complexes and as an atypical serine/threonine-protein kinase, playing key roles in various processes such as cell cycle, telomerase regulation and histone modification. Probable substrate-specific adapter of a DCX (DDB1-CUL4-X-box) E3 ubiquitin-protein ligase complex, named CUL4A-RBX1-DDB1-DCAF1/VPRBP complex, which mediates ubiquitination and proteasome-dependent degradation of proteins such as NF2. Involved in the turnover of methylated proteins: recognizes and binds methylated proteins via its chromo domain, leading to ubiquitination of target proteins by the RBX1-DDB1-DCAF1/VPRBP complex. The CUL4A-RBX1-DDB1-DCAF1/VPRBP complex is also involved in B-cell development: DCAF1 is recruited by RAG1 to ubiquitinate proteins, leading to limit error-prone repair during V(D)J recombination. Also part of the EDVP complex, an E3 ligase complex that mediates ubiquitination of proteins such as TERT, leading to TERT degradation and telomerase inhibition. The EDVP complex also mediates ubiquitination and degradation of CCP110. Also acts as an atypical serine/threonine-protein kinase that specifically mediates phosphorylation of 'Thr-120' of histone H2A (H2AT120ph) in a nucleosomal context, thereby repressing transcription. H2AT120ph is present in the regulatory region of many tumor suppresor genes, down-regulates their transcription and is present at high level in a number of tumors. Involved in JNK-mediated apoptosis during cell competition process via its interaction with LLGL1 and LLGL2. By acting on TET dioxygenses, essential for oocyte maintenance at the primordial follicle stage, hence essential for female fertility. The protein is DDB1- and CUL4-associated factor 1 of Mus musculus (Mouse).